Reading from the N-terminus, the 449-residue chain is MFREKFRKFHFIGIGGIGMSGIAKILLDMGYEVSGSDVRQNDVIKELKEKGATIYIGHDAKNVIGKEVVVYSSAISNVNEELLKAKELGLQVISRGDMLADLFRMKEGIAISGSHGKTTTTSMISHISHIAGLDPTVLIGGILQTFGSNAVLGKSELLISEADESDGSFLKLNSVINVVTNIDKEHIGYYKDYEDIKEAFVKFINNVPFYGASVVNIDDTGVRSILSKIHKKIITYGIESGDFQAKNIVFNSDNTRFDVFYKGIKLNTIELQIPGIHNVYNALASIAVSTLMEIEQPVIRDALKSFKNAKRRIEFVGEKNTNLIYDDYGHHPTEIKSVYEALKSKYKDKNIVVVFQPHRYSRTYYLIDDFVDLFKSLDKVFLLDIYGASEENTFGISSLDMINKVSKEECVYIPSKEELFDRLDELKDSVIVFMGAGSIGQWSHEYAKT.

Residue 113-119 coordinates ATP; that stretch reads GSHGKTT.

Belongs to the MurCDEF family.

The protein resides in the cytoplasm. The enzyme catalyses UDP-N-acetyl-alpha-D-muramate + L-alanine + ATP = UDP-N-acetyl-alpha-D-muramoyl-L-alanine + ADP + phosphate + H(+). It participates in cell wall biogenesis; peptidoglycan biosynthesis. In terms of biological role, cell wall formation. The sequence is that of UDP-N-acetylmuramate--L-alanine ligase from Hydrogenobaculum sp. (strain Y04AAS1).